Here is a 960-residue protein sequence, read N- to C-terminus: Phosphoenolpyruvate carboxylase 2 (960 aa).

Residues histidine 167 and lysine 595 contribute to the active site.

Belongs to the PEPCase type 1 family. In terms of assembly, homotetramer. The cofactor is Mg(2+).

The protein localises to the cytoplasm. The enzyme catalyses oxaloacetate + phosphate = phosphoenolpyruvate + hydrogencarbonate. It participates in photosynthesis; C3 acid pathway. Its function is as follows. Through the carboxylation of phosphoenolpyruvate (PEP) it forms oxaloacetate, a four-carbon dicarboxylic acid source for the tricarboxylic acid cycle. The polypeptide is Phosphoenolpyruvate carboxylase 2 (Sorghum bicolor (Sorghum)).